A 221-amino-acid polypeptide reads, in one-letter code: Transcription factor MYB1 (221 aa).

2 consecutive HTH myb-type domains span residues 1 to 57 and 58 to 112; these read MESV…LNYL and RPNI…QKKL. 2 consecutive DNA-binding regions (H-T-H motif) follow at residues 33–57 and 85–108; these read WHQV…LNYL and WSLI…NTHL. The segment at 126–154 is disordered; it reads KTIVPKGTEAQPRAHPKSPPRPSPPSNNE.

As to expression, expressed in stems and leaves. Expressed at low levels in ovaries.

It is found in the nucleus. Functionally, transcription activator involved in the regulation of anthocyanin biosynthesis in red-fleshed kiwifruit varieties. Activates the transcription of genes involved in anthocyanin biosynthesis, such as dihydroflavonol reductase (DFR), anthocyanidin synthase (ANS) and UDP flavonoid glycosyltransferase (UFGT). This chain is Transcription factor MYB1, found in Actinidia chinensis var. chinensis (Chinese soft-hair kiwi).